A 402-amino-acid chain; its full sequence is Propionate kinase (402 aa).

Residues Asn-11 and Lys-18 each coordinate ATP. A Mg(2+)-binding site is contributed by Asn-11. Arg-86 lines the substrate pocket. Catalysis depends on Asp-143, which acts as the Proton donor/acceptor. Residues His-175, 203-207 (HLGNG), 278-280 (DLR), and 326-330 (GIGEN) contribute to the ATP site.

Belongs to the acetokinase family. TdcD subfamily. As to quaternary structure, homodimer. The cofactor is Mg(2+).

It catalyses the reaction propanoate + ATP = propanoyl phosphate + ADP. It participates in amino-acid degradation; L-threonine degradation via propanoate pathway; propanoate from L-threonine: step 4/4. Catalyzes the conversion of propionyl phosphate and ADP to propionate and ATP. The sequence is that of Propionate kinase from Citrobacter koseri (strain ATCC BAA-895 / CDC 4225-83 / SGSC4696).